We begin with the raw amino-acid sequence, 432 residues long: Acetylserotonin O-methyltransferase (432 aa).

S-adenosyl-L-methionine-binding positions include tyrosine 146, tryptophan 163, aspartate 209, 235 to 237 (GDF), and arginine 252. The Proton donor/acceptor role is filled by histidine 255. Substrate-binding residues include aspartate 256, asparagine 302, and glutamine 306. Positions 373-432 (VPGARSDAAGTGSGTGNTGSGIMLQGETLESEVSAPQAGSDVGGAGNEPRSGTLKQGDWK) are disordered.

This sequence belongs to the class I-like SAM-binding methyltransferase superfamily. Cation-independent O-methyltransferase family. As to quaternary structure, homodimer. As to expression, expressed predominantly in the pineal gland (at protein level). Very low expression, if any, in the retina.

The catalysed reaction is N-acetylserotonin + S-adenosyl-L-methionine = melatonin + S-adenosyl-L-homocysteine + H(+). It participates in aromatic compound metabolism; melatonin biosynthesis; melatonin from serotonin: step 1/2. Functionally, catalyzes the transfer of a methyl group onto N-acetylserotonin, producing melatonin (N-acetyl-5-methoxytryptamine). The sequence is that of Acetylserotonin O-methyltransferase (Asmt) from Rattus norvegicus (Rat).